A 361-amino-acid chain; its full sequence is 3-dehydroquinate synthase (361 aa).

Residues D71–K76, G105–D109, T129–T130, K142, K151, and C169–T172 contribute to the NAD(+) site. Positions 184, 247, and 264 each coordinate Zn(2+).

The protein belongs to the sugar phosphate cyclases superfamily. Dehydroquinate synthase family. The cofactor is Co(2+). Zn(2+) serves as cofactor. NAD(+) is required as a cofactor.

It localises to the cytoplasm. The catalysed reaction is 7-phospho-2-dehydro-3-deoxy-D-arabino-heptonate = 3-dehydroquinate + phosphate. It functions in the pathway metabolic intermediate biosynthesis; chorismate biosynthesis; chorismate from D-erythrose 4-phosphate and phosphoenolpyruvate: step 2/7. Its function is as follows. Catalyzes the conversion of 3-deoxy-D-arabino-heptulosonate 7-phosphate (DAHP) to dehydroquinate (DHQ). This chain is 3-dehydroquinate synthase, found in Sodalis glossinidius (strain morsitans).